Here is an 82-residue protein sequence, read N- to C-terminus: Small ribosomal subunit protein eS17 (82 aa).

The protein belongs to the eukaryotic ribosomal protein eS17 family.

This Sulfolobus acidocaldarius (strain ATCC 33909 / DSM 639 / JCM 8929 / NBRC 15157 / NCIMB 11770) protein is Small ribosomal subunit protein eS17.